The primary structure comprises 377 residues: Phospho-N-acetylmuramoyl-pentapeptide-transferase (377 aa).

Transmembrane regions (helical) follow at residues 9–29 (YITL…LVAG), 62–82 (MGGA…ADWI), 85–105 (FVWV…MDDY), 122–142 (FFWQ…AVSA), 155–175 (WVGS…VPFF), 178–198 (VSYP…IVGT), 210–230 (GLAI…AYVV), 247–267 (AAEL…FLWF), 274–294 (VFMG…IAVI), 299–319 (IVLF…MVQV), and 354–374 (QVVV…LSTL).

It belongs to the glycosyltransferase 4 family. MraY subfamily. It depends on Mg(2+) as a cofactor.

It is found in the cell inner membrane. The catalysed reaction is UDP-N-acetyl-alpha-D-muramoyl-L-alanyl-gamma-D-glutamyl-meso-2,6-diaminopimeloyl-D-alanyl-D-alanine + di-trans,octa-cis-undecaprenyl phosphate = di-trans,octa-cis-undecaprenyl diphospho-N-acetyl-alpha-D-muramoyl-L-alanyl-D-glutamyl-meso-2,6-diaminopimeloyl-D-alanyl-D-alanine + UMP. The protein operates within cell wall biogenesis; peptidoglycan biosynthesis. In terms of biological role, catalyzes the initial step of the lipid cycle reactions in the biosynthesis of the cell wall peptidoglycan: transfers peptidoglycan precursor phospho-MurNAc-pentapeptide from UDP-MurNAc-pentapeptide onto the lipid carrier undecaprenyl phosphate, yielding undecaprenyl-pyrophosphoryl-MurNAc-pentapeptide, known as lipid I. The sequence is that of Phospho-N-acetylmuramoyl-pentapeptide-transferase from Bordetella parapertussis (strain 12822 / ATCC BAA-587 / NCTC 13253).